The chain runs to 189 residues: Protein GrpE (189 aa).

The segment at 1 to 37 is disordered; the sequence is MSDSSKEKKKKFADMVSRQKGDDQQSDNHKQTDDLNE. The span at 17 to 33 shows a compositional bias: basic and acidic residues; that stretch reads SRQKGDDQQSDNHKQTD.

Belongs to the GrpE family. In terms of assembly, homodimer.

Its subcellular location is the cytoplasm. Participates actively in the response to hyperosmotic and heat shock by preventing the aggregation of stress-denatured proteins, in association with DnaK and GrpE. It is the nucleotide exchange factor for DnaK and may function as a thermosensor. Unfolded proteins bind initially to DnaJ; upon interaction with the DnaJ-bound protein, DnaK hydrolyzes its bound ATP, resulting in the formation of a stable complex. GrpE releases ADP from DnaK; ATP binding to DnaK triggers the release of the substrate protein, thus completing the reaction cycle. Several rounds of ATP-dependent interactions between DnaJ, DnaK and GrpE are required for fully efficient folding. The protein is Protein GrpE of Wolbachia sp. subsp. Drosophila simulans (strain wRi).